The following is a 196-amino-acid chain: 3-isopropylmalate dehydratase small subunit (196 aa).

The protein belongs to the LeuD family. LeuD type 1 subfamily. In terms of assembly, heterodimer of LeuC and LeuD.

It carries out the reaction (2R,3S)-3-isopropylmalate = (2S)-2-isopropylmalate. Its pathway is amino-acid biosynthesis; L-leucine biosynthesis; L-leucine from 3-methyl-2-oxobutanoate: step 2/4. Its function is as follows. Catalyzes the isomerization between 2-isopropylmalate and 3-isopropylmalate, via the formation of 2-isopropylmaleate. The chain is 3-isopropylmalate dehydratase small subunit from Corynebacterium diphtheriae (strain ATCC 700971 / NCTC 13129 / Biotype gravis).